The following is a 219-amino-acid chain: MNLSCSLVLLGGGKGERFNSLQPKQYTHLCGEPLILHALHAYQRLPFVQEVVVVCEEQYRELFLPYSVKFASPGTLRQDSVFSGLQQVSTPWVCIHDGVRPFVYADEVIEVCSAARKTGAAALASPATYTIKSCAPVRTLDRDALAVIHTPQCLDTEVLREGLLLARAMDFSLSDDTEAAELLGIEPTLVFSNRVQIKVTYPEDLLFAETLLSKSSTYK.

This sequence belongs to the IspD/TarI cytidylyltransferase family. IspD subfamily.

The catalysed reaction is 2-C-methyl-D-erythritol 4-phosphate + CTP + H(+) = 4-CDP-2-C-methyl-D-erythritol + diphosphate. Its pathway is isoprenoid biosynthesis; isopentenyl diphosphate biosynthesis via DXP pathway; isopentenyl diphosphate from 1-deoxy-D-xylulose 5-phosphate: step 2/6. Its function is as follows. Catalyzes the formation of 4-diphosphocytidyl-2-C-methyl-D-erythritol from CTP and 2-C-methyl-D-erythritol 4-phosphate (MEP). This is 2-C-methyl-D-erythritol 4-phosphate cytidylyltransferase from Chlamydia trachomatis serovar D (strain ATCC VR-885 / DSM 19411 / UW-3/Cx).